The following is a 478-amino-acid chain: MLARHHHPIVAIATAPGRGGVGIVRLSGQRIAPVVQALCGRKLSPRQATYLPFRDAHGQIIDKGLAIFFPAPHSYTGEDVLELQAHGGPVVLQLLLARCLEAGAALDPATGQPVLAQLRVAEPGEFTERAFLNDKIDLAQAEAIADLIDASTETAARSAARSMSGEFSQAVNTLLEQLIHLRMLVEATLDFPEEDIDFLQQADAQGQLLRLQATLASVLARATQGAILREGIKVVIAGQPNVGKSSLLNALAGAELAIVTPVAGTTRDKVSQLIQIEGVPLHVVDTAGLREALDEVEKIGIQRAWTEIESADAVLFLHDLARHDATENPLYAINYIADDARLQSALALKLPKNTAIIDVWNKSDMAGPELLRQVNGGVLISAKTGAGLQALREQLLRVVGWQAAPEGVFMARERHVSALRSVQIQLLTAQNQLQAAVPALDLLAEDLRQAQLHLSSITGAFNADDLLGEIFSKFCIGK.

(6S)-5-formyl-5,6,7,8-tetrahydrofolate is bound by residues arginine 25, glutamate 82, and lysine 135. The region spanning 231–400 (GIKVVIAGQP…LREQLLRVVG (170 aa)) is the TrmE-type G domain. Asparagine 241 is a K(+) binding site. GTP-binding positions include 241 to 246 (NVGKSS), 260 to 266 (TPVAGTT), and 285 to 288 (DTAG). Serine 245 provides a ligand contact to Mg(2+). K(+)-binding residues include threonine 260, valine 262, and threonine 265. Mg(2+) is bound at residue threonine 266. Lysine 478 contacts (6S)-5-formyl-5,6,7,8-tetrahydrofolate.

This sequence belongs to the TRAFAC class TrmE-Era-EngA-EngB-Septin-like GTPase superfamily. TrmE GTPase family. Homodimer. Heterotetramer of two MnmE and two MnmG subunits. Requires K(+) as cofactor.

Its subcellular location is the cytoplasm. In terms of biological role, exhibits a very high intrinsic GTPase hydrolysis rate. Involved in the addition of a carboxymethylaminomethyl (cmnm) group at the wobble position (U34) of certain tRNAs, forming tRNA-cmnm(5)s(2)U34. This chain is tRNA modification GTPase MnmE, found in Polaromonas naphthalenivorans (strain CJ2).